A 404-amino-acid chain; its full sequence is Alkane 1-monooxygenase 1 (404 aa).

4 consecutive transmembrane segments (helical) span residues 25–45 (HLWI…YLVS), 47–67 (TGWS…VPLI), 94–114 (VLTY…AWWV), and 119–139 (IGVF…GLAL). Residues His-143 and His-147 each contribute to the Fe cation site. Residues 151–171 (TFDRWMAKLVLAVVGYGHFFI) form a helical membrane-spanning segment. Residues His-173, His-177, and His-178 each coordinate Fe cation. The chain crosses the membrane as a helical span at residues 241–261 (VVLYAALLAFFGPLMLIFLPI). Fe cation-binding residues include His-317, His-320, and His-321.

This sequence belongs to the fatty acid desaturase type 1 family. AlkB subfamily. It depends on Fe(3+) as a cofactor.

Its subcellular location is the cell inner membrane. It carries out the reaction octane + 2 reduced [rubredoxin] + O2 + 2 H(+) = 2 oxidized [rubredoxin] + octan-1-ol + H2O. It participates in hydrocarbon metabolism; alkane degradation. Functionally, catalyzes the hydroxylation of n-alkanes and fatty acids in the presence of a NADH-rubredoxin reductase and rubredoxin. It preferably hydroxylases C5-C12 hydrocarbons. This chain is Alkane 1-monooxygenase 1 (alkB1), found in Alcanivorax borkumensis (strain ATCC 700651 / DSM 11573 / NCIMB 13689 / SK2).